The primary structure comprises 123 residues: Large ribosomal subunit protein bL17 (123 aa).

The protein belongs to the bacterial ribosomal protein bL17 family. As to quaternary structure, part of the 50S ribosomal subunit. Contacts protein L32.

The protein is Large ribosomal subunit protein bL17 of Borrelia hermsii (strain HS1 / DAH).